The primary structure comprises 652 residues: Sodium-dependent nutrient amino acid transporter 1 (652 aa).

A disordered region spans residues 1 to 54 (MELKGVHQQNGTSNGTGAVGAEGESAPPTAPATAEAAASLETTTEKVDAEQQKP). Topologically, residues 1–58 (MELKGVHQQNGTSNGTGAVGAEGESAPPTAPATAEAAASLETTTEKVDAEQQKPERTN) are cytoplasmic. Over residues 7–16 (HQQNGTSNGT) the composition is skewed to polar residues. The span at 21-42 (AEGESAPPTAPATAEAAASLET) shows a compositional bias: low complexity. Residues 43–54 (TTEKVDAEQQKP) show a composition bias toward basic and acidic residues. 4 helical membrane-spanning segments follow: residues 59 to 79 (WGNG…LGNV), 92 to 112 (GAFL…MYYL), 130 to 150 (VVPG…CIIT), and 155 to 175 (LLAL…PWSY). N-linked (GlcNAc...) asparagine glycosylation is found at Asn-201 and Asn-204. 9 consecutive transmembrane segments (helical) span residues 240-260 (PDWK…LVIM), 269-289 (AAYF…VRAV), 318-338 (AVVQ…MFAS), 352-372 (IVTT…FAIL), 412-432 (LFSV…IVAL), 458-478 (ICGF…ILTL), 485-505 (TYVV…IYGM), 527-547 (CWSF…MVTI), and 564-584 (AGWL…MWYI).

It belongs to the sodium:neurotransmitter symporter (SNF) (TC 2.A.22) family.

It localises to the membrane. Unusual broad substrate spectrum amino acid:sodium cotransporter that promotes absorption of the D isomers of essential amino acids. Neutral amino acids are the preferred substrates, especially methionine and phenylalanine. This chain is Sodium-dependent nutrient amino acid transporter 1, found in Drosophila persimilis (Fruit fly).